Reading from the N-terminus, the 434-residue chain is Protein maelstrom homolog (434 aa).

Positions 4–73 (RRGSRNAYYF…AQGKDAGPWE (70 aa)) form a DNA-binding region, HMG box. The disordered stretch occupies residues 357–387 (SHFSSSNQEQRSNTPTGDYPSGVKISGQSSS). A compositionally biased stretch (polar residues) spans 363–372 (NQEQRSNTPT).

It belongs to the maelstrom family. Interacts with SMARCB1, SIN3B and DDX4. Interacts with piRNA-associated proteins TDRD1, PIWIL1 and PIWIL2. Interacts with TEX19.

Its subcellular location is the cytoplasm. The protein localises to the nucleus. In terms of biological role, plays a central role during spermatogenesis by repressing transposable elements and preventing their mobilization, which is essential for the germline integrity. Acts via the piRNA metabolic process, which mediates the repression of transposable elements during meiosis by forming complexes composed of piRNAs and Piwi proteins and governs the methylation and subsequent repression of transposons. Its association with piP-bodies suggests a participation in the secondary piRNAs metabolic process. Required for the localization of germ-cell factors to the meiotic nuage. The protein is Protein maelstrom homolog (MAEL) of Sus scrofa (Pig).